The sequence spans 198 residues: DnaJ homolog subfamily C member 12 (198 aa).

M1 carries the post-translational modification N-acetylmethionine. The J domain maps to 14–79 (DYYTLLGCDE…ESRARYDHWR (66 aa)). The segment covering 114–156 (EESDKTHTTKMENEECNEQRERKKEELASTAEKTEQKEPKPLE) has biased composition (basic and acidic residues). The interval 114–169 (EESDKTHTTKMENEECNEQRERKKEELASTAEKTEQKEPKPLEKSVSPQNSDSSGF) is disordered. Phosphoserine occurs at positions 160, 166, and 182.

As to quaternary structure, interacts with HSPA8. Interacts with TPH1. Interacts with TPH2. In terms of tissue distribution, expressed at high levels in brain, heart, and testis, and at reduced levels in kidney and stomach.

The protein resides in the cytoplasm. Functionally, probable co-chaperone that participates in the proper folding of biopterin-dependent aromatic amino acid hydroxylases, which include phenylalanine-4-hydroxylase (PAH), tyrosine 3-monooxygenase (TH) and peripheral and neuronal tryptophan hydroxylases (TPH1 and TPH2). The sequence is that of DnaJ homolog subfamily C member 12 (DNAJC12) from Homo sapiens (Human).